The primary structure comprises 295 residues: MAETKVAPNLTGIEQTKAGQSFTEKLSAEAMEFFCNVAKLPFSQQAVHFLNAYWAEVSKEAEFIYSVGWETIKYADMHCKGIQLVFKYDEGNDLDFDIALYFYEQLCKFCEDPKNKNYATTYPISQPQMLTALKRKQELREKVDVNFDGRVSFLEYLLYQYKDFANPADFCTRSMNHDEHPEIKKARLALEEVNKRIRAYEEEKARLTEESKIPGVKGLGATNMLAQIDSGPLKEQLNFALISAEAAVRTASKKYGGAAYSGGAGDAGAGSSAGAIWWMNRDLEEKKKRYGPQKK.

As to quaternary structure, monomer.

May contribute to the structure and reorganization of filopodia and pseudopodia accompanying cell movements. This chain is Calcium-regulated actin-bundling protein (abpB), found in Dictyostelium discoideum (Social amoeba).